We begin with the raw amino-acid sequence, 428 residues long: Peptidase B (428 aa).

Residues lysine 195 and aspartate 200 each coordinate Mn(2+). Lysine 207 is an active-site residue. Mn(2+) is bound by residues aspartate 218, aspartate 277, and glutamate 279. Residue arginine 281 is part of the active site.

Belongs to the peptidase M17 family. In terms of assembly, homohexamer. It depends on Mn(2+) as a cofactor.

Its subcellular location is the cytoplasm. It carries out the reaction Release of an N-terminal amino acid, Xaa, from a peptide or arylamide. Xaa is preferably Glu or Asp but may be other amino acids, including Leu, Met, His, Cys and Gln.. Functionally, probably plays an important role in intracellular peptide degradation. The sequence is that of Peptidase B from Klebsiella pneumoniae (strain 342).